Reading from the N-terminus, the 218-residue chain is Octanoyltransferase (218 aa).

In terms of domain architecture, BPL/LPL catalytic spans glycine 32–aspartate 218. Residues arginine 71–histidine 78, alanine 151–glycine 153, and glycine 164–serine 166 contribute to the substrate site. Residue cysteine 182 is the Acyl-thioester intermediate of the active site.

It belongs to the LipB family.

It localises to the cytoplasm. It catalyses the reaction octanoyl-[ACP] + L-lysyl-[protein] = N(6)-octanoyl-L-lysyl-[protein] + holo-[ACP] + H(+). It participates in protein modification; protein lipoylation via endogenous pathway; protein N(6)-(lipoyl)lysine from octanoyl-[acyl-carrier-protein]: step 1/2. Its function is as follows. Catalyzes the transfer of endogenously produced octanoic acid from octanoyl-acyl-carrier-protein onto the lipoyl domains of lipoate-dependent enzymes. Lipoyl-ACP can also act as a substrate although octanoyl-ACP is likely to be the physiological substrate. This chain is Octanoyltransferase, found in Cereibacter sphaeroides (strain ATCC 17025 / ATH 2.4.3) (Rhodobacter sphaeroides).